Reading from the N-terminus, the 579-residue chain is Insulin-like growth factor 2 mRNA-binding protein 3 (579 aa).

RRM domains are found at residues 2–75 (NKLY…HSVP) and 81–156 (RKLQ…YIPD). Positions 160 to 192 (AQQNPLQQPRGRRGLGQRGSSRQGSPGSVSKQK) are disordered. Residues 177–187 (RGSSRQGSPGS) are compositionally biased toward low complexity. A Phosphoserine modification is found at Ser-184. KH domains follow at residues 195-260 (DLPL…CKSI), 276-343 (EIPL…EEEI), and 405-470 (TETV…QGRI). Residues Lys-450 and Lys-475 each participate in a glycyl lysine isopeptide (Lys-Gly) (interchain with G-Cter in SUMO2) cross-link. Residues 487-553 (KLEAHIRVPS…YACQVAQRKI (67 aa)) form the KH 4 domain. Thr-528 is modified (phosphothreonine).

This sequence belongs to the RRM IMP/VICKZ family. As to quaternary structure, can form homooligomers and heterooligomers with IGF2BP1 and IGF2BP3 in an RNA-dependent manner. Interacts with IGF2BP1. Interacts with ELAVL1, DHX9, HNRNPU, MATR3 and PABPC1. As to expression, expressed in fetal liver, fetal lung, fetal kidney, fetal thymus, fetal placenta, fetal follicles of ovary and gonocytes of testis, growing oocytes, spermatogonia and semen (at protein level). Expressed in cervix adenocarcinoma, in testicular, pancreatic and renal-cell carcinomas (at protein level). Expressed ubiquitously during fetal development at 8 and 14 weeks of gestation. Expressed in ovary, testis, brain, placenta, pancreatic cancer tissues and pancreatic cancer cell lines.

It localises to the nucleus. The protein localises to the cytoplasm. The protein resides in the P-body. It is found in the stress granule. In terms of biological role, RNA-binding factor that may recruit target transcripts to cytoplasmic protein-RNA complexes (mRNPs). This transcript 'caging' into mRNPs allows mRNA transport and transient storage. It also modulates the rate and location at which target transcripts encounter the translational apparatus and shields them from endonuclease attacks or microRNA-mediated degradation. Preferentially binds to N6-methyladenosine (m6A)-containing mRNAs and increases their stability. Binds to the 3'-UTR of CD44 mRNA and stabilizes it, hence promotes cell adhesion and invadopodia formation in cancer cells. Binds to beta-actin/ACTB and MYC transcripts. Increases MYC mRNA stability by binding to the coding region instability determinant (CRD) and binding is enhanced by m6A-modification of the CRD. Binds to the 5'-UTR of the insulin-like growth factor 2 (IGF2) mRNAs. This is Insulin-like growth factor 2 mRNA-binding protein 3 (IGF2BP3) from Homo sapiens (Human).